Consider the following 285-residue polypeptide: 4-diphosphocytidyl-2-C-methyl-D-erythritol kinase (285 aa).

Lys-12 is an active-site residue. 95–105 (PMGGGVGGGSS) contributes to the ATP binding site. Residue Asp-137 is part of the active site.

The protein belongs to the GHMP kinase family. IspE subfamily.

It carries out the reaction 4-CDP-2-C-methyl-D-erythritol + ATP = 4-CDP-2-C-methyl-D-erythritol 2-phosphate + ADP + H(+). The protein operates within isoprenoid biosynthesis; isopentenyl diphosphate biosynthesis via DXP pathway; isopentenyl diphosphate from 1-deoxy-D-xylulose 5-phosphate: step 3/6. Functionally, catalyzes the phosphorylation of the position 2 hydroxy group of 4-diphosphocytidyl-2C-methyl-D-erythritol. The polypeptide is 4-diphosphocytidyl-2-C-methyl-D-erythritol kinase (Actinobacillus pleuropneumoniae serotype 7 (strain AP76)).